We begin with the raw amino-acid sequence, 158 residues long: Urease subunit beta (158 aa).

The tract at residues 113-158 (EDDWRRSSAAGDAPQELPQVEAAERGRKLDEATDVGTEDTPEEGQN) is disordered. Positions 134-143 (AAERGRKLDE) are enriched in basic and acidic residues. A compositionally biased stretch (acidic residues) spans 144 to 158 (ATDVGTEDTPEEGQN).

The protein belongs to the urease beta subunit family. Heterotrimer of UreA (gamma), UreB (beta) and UreC (alpha) subunits. Three heterotrimers associate to form the active enzyme.

It localises to the cytoplasm. It catalyses the reaction urea + 2 H2O + H(+) = hydrogencarbonate + 2 NH4(+). The protein operates within nitrogen metabolism; urea degradation; CO(2) and NH(3) from urea (urease route): step 1/1. The sequence is that of Urease subunit beta from Corynebacterium glutamicum (strain R).